The primary structure comprises 1318 residues: Maestro heat-like repeat family member 5 (1318 aa).

A disordered region spans residues 1-38 (MDRQCSERPYSCTPTGRVSSAVSQNSRISPPVSTSMKD). Positions 12–38 (CTPTGRVSSAVSQNSRISPPVSTSMKD) are enriched in polar residues. The HEAT 1 repeat unit spans residues 581 to 618 (DELHFLLSHLYIWLASEKAHERQRAVHSCMILLKFLNH). Residues 676–695 (ESQAPKELSQAHSDGAPLWN) are disordered. 8 HEAT repeats span residues 769 to 811 (GAKL…SHTC), 840 to 880 (PTSH…LLAA), 996 to 1033 (RQIPAVLRQLLPSLQSPQERERKVAILILTKFLYSPVL), 1037 to 1074 (LPKQAALTVLAQGLHDPSPEVRVLSLQGLSNILFHPDK), 1076 to 1113 (SLLQGQLRPLLDGFFQSSDQVIVCIMGTVSDTLHRLGA), 1118 to 1155 (SQSLGVAISTRSFFNDERDGIRAAAMALFGDLVAAMAD), 1164 to 1200 (QVHQSMVPLLLHLKDQCPAVATQAKFTFYRCAVLLRW), and 1278 to 1315 (VDTNLLFRTFEHLRSDPEPSIREFATSQLSFLQKVSAR).

The polypeptide is Maestro heat-like repeat family member 5 (MROH5) (Homo sapiens (Human)).